The primary structure comprises 261 residues: Type III pantothenate kinase (261 aa).

6–13 (DVGNTNTV) lines the ATP pocket. A substrate-binding site is contributed by 107–110 (GADR). Catalysis depends on Asp109, which acts as the Proton acceptor. A K(+)-binding site is contributed by Asp129. Position 132 (Thr132) interacts with ATP. A substrate-binding site is contributed by Thr183.

This sequence belongs to the type III pantothenate kinase family. As to quaternary structure, homodimer. The cofactor is NH4(+). It depends on K(+) as a cofactor.

It is found in the cytoplasm. It catalyses the reaction (R)-pantothenate + ATP = (R)-4'-phosphopantothenate + ADP + H(+). Its pathway is cofactor biosynthesis; coenzyme A biosynthesis; CoA from (R)-pantothenate: step 1/5. In terms of biological role, catalyzes the phosphorylation of pantothenate (Pan), the first step in CoA biosynthesis. This is Type III pantothenate kinase from Kosmotoga olearia (strain ATCC BAA-1733 / DSM 21960 / TBF 19.5.1).